Reading from the N-terminus, the 273-residue chain is 4-hydroxy-tetrahydrodipicolinate reductase (273 aa).

Residues 11–16 and 106–108 each bind NAD(+); these read GALGRM and GTT. Histidine 162 functions as the Proton donor/acceptor in the catalytic mechanism. Histidine 163 provides a ligand contact to (S)-2,3,4,5-tetrahydrodipicolinate. The active-site Proton donor is lysine 166. (S)-2,3,4,5-tetrahydrodipicolinate is bound at residue 172-173; sequence GT.

This sequence belongs to the DapB family.

It localises to the cytoplasm. The enzyme catalyses (S)-2,3,4,5-tetrahydrodipicolinate + NAD(+) + H2O = (2S,4S)-4-hydroxy-2,3,4,5-tetrahydrodipicolinate + NADH + H(+). The catalysed reaction is (S)-2,3,4,5-tetrahydrodipicolinate + NADP(+) + H2O = (2S,4S)-4-hydroxy-2,3,4,5-tetrahydrodipicolinate + NADPH + H(+). It functions in the pathway amino-acid biosynthesis; L-lysine biosynthesis via DAP pathway; (S)-tetrahydrodipicolinate from L-aspartate: step 4/4. Functionally, catalyzes the conversion of 4-hydroxy-tetrahydrodipicolinate (HTPA) to tetrahydrodipicolinate. The polypeptide is 4-hydroxy-tetrahydrodipicolinate reductase (Synechococcus sp. (strain RCC307)).